A 232-amino-acid chain; its full sequence is RNA chaperone ProQ (232 aa).

The interval 105–182 is disordered; it reads EAKARVQAQR…REEQHTPVSD (78 aa). Residues 117-136 show a composition bias toward basic and acidic residues; that stretch reads QQAKKREAAAAAGEKEDAPR. Residues 137-146 are compositionally biased toward basic residues; sequence RERKPRPTTP. Residues 147–177 are compositionally biased toward basic and acidic residues; it reads RRKEGAERKPRAQKPVEKAPKTVKAPREEQH.

It belongs to the ProQ family.

The protein localises to the cytoplasm. Functionally, RNA chaperone with significant RNA binding, RNA strand exchange and RNA duplexing activities. May regulate ProP activity through an RNA-based, post-transcriptional mechanism. The sequence is that of RNA chaperone ProQ from Shigella boydii serotype 18 (strain CDC 3083-94 / BS512).